Here is a 61-residue protein sequence, read N- to C-terminus: Large ribosomal subunit protein eL24 (61 aa).

Positions 7, 10, 33, and 37 each coordinate Zn(2+). The C4-type zinc-finger motif lies at 7 to 37 (CSFCGKEIPPATGLMYIRNDGSILWFCSNKC).

It belongs to the eukaryotic ribosomal protein eL24 family. As to quaternary structure, part of the 50S ribosomal subunit. Forms a cluster with proteins L3 and L14. The cofactor is Zn(2+).

Its function is as follows. Binds to the 23S rRNA. The chain is Large ribosomal subunit protein eL24 from Sulfurisphaera tokodaii (strain DSM 16993 / JCM 10545 / NBRC 100140 / 7) (Sulfolobus tokodaii).